A 62-amino-acid chain; its full sequence is Large ribosomal subunit protein bL28 (62 aa).

Belongs to the bacterial ribosomal protein bL28 family.

This is Large ribosomal subunit protein bL28 from Staphylococcus epidermidis (strain ATCC 12228 / FDA PCI 1200).